The sequence spans 396 residues: B2 bradykinin receptor (396 aa).

Residues 1–65 (MDTRSSLCPK…EWWSWLNAIQ (65 aa)) are Extracellular-facing. 2 N-linked (GlcNAc...) asparagine glycosylation sites follow: N33 and N44. A helical membrane pass occupies residues 66 to 89 (APFLWVLFLLAALENIFVLSVFCL). Residues 90 to 98 (HKTNCTVAE) lie on the Cytoplasmic side of the membrane. The helical transmembrane segment at 99 to 123 (IYLGNLAAADLILACGLPFWAITIA) threads the bilayer. Residues 124–136 (NNFDWLFGEVLCR) are Extracellular-facing. A disulfide bond links C135 and C216. A helical transmembrane segment spans residues 137–158 (VVNTMIYMNLYSSICFLMLVSI). The Cytoplasmic segment spans residues 159–180 (DRYLALVKTMSMGRMRGVRWAK). The residue at position 161 (Y161) is a Phosphotyrosine. Residues 181–203 (LYSLVIWSCTLLLSSPMLVFRTM) traverse the membrane as a helical segment. Residues 204–226 (KDYREEGHNVTACVIVYPSRSWE) are Extracellular-facing. A glycan (N-linked (GlcNAc...) asparagine) is linked at N212. The chain crosses the membrane as a helical span at residues 227–253 (VFTNMLLNLVGFLLPLSIITFCTVRIM). Topologically, residues 254–272 (QVLRNNEMKKFKEVQTEKK) are cytoplasmic. Residues 273–297 (ATVLVLAVLGLFVLCWFPFQISTFL) traverse the membrane as a helical segment. Topologically, residues 298–316 (DTLLRLGVLSGCWNERAVD) are extracellular. Residues 317–340 (IVTQISSYVAYSNSCLNPLVYVIV) form a helical membrane-spanning segment. The Cytoplasmic portion of the chain corresponds to 341-396 (GKRFRKKSREVYQAICRKGGCMGESVQMENSMGTLRTSISVDRQIHKLQDWAGNKQ). Residue Y352 is modified to Phosphotyrosine. C356 carries S-palmitoyl cysteine lipidation. A phosphoserine mark is found at S365 and S371. T374 is subject to Phosphothreonine. A phosphoserine; by GRK6 mark is found at S378 and S380.

The protein belongs to the G-protein coupled receptor 1 family. Bradykinin receptor subfamily. BDKRB2 sub-subfamily. In terms of assembly, forms a complex with PECAM1 and GNAQ. Interacts with PECAM1. Diphosphorylation at Ser-365 and Ser-371, at Ser-378 and Ser-380, and at Thr-374 and Ser-380 seem to be correlated pairwise. In terms of processing, palmitoylation at Cys-356 and phosphorylation at Tyr-352 seem to be mutually exclusive. In terms of tissue distribution, uterus, vas deferens, kidney, ileum, heart, testis, lung and brain.

Its subcellular location is the cell membrane. Its function is as follows. Receptor for bradykinin. It is associated with G proteins that activate a phosphatidylinositol-calcium second messenger system. The polypeptide is B2 bradykinin receptor (Bdkrb2) (Rattus norvegicus (Rat)).